Reading from the N-terminus, the 479-residue chain is Proline--tRNA ligase (479 aa).

It belongs to the class-II aminoacyl-tRNA synthetase family. ProS type 3 subfamily. Homodimer.

It is found in the cytoplasm. It catalyses the reaction tRNA(Pro) + L-proline + ATP = L-prolyl-tRNA(Pro) + AMP + diphosphate. Functionally, catalyzes the attachment of proline to tRNA(Pro) in a two-step reaction: proline is first activated by ATP to form Pro-AMP and then transferred to the acceptor end of tRNA(Pro). This is Proline--tRNA ligase from Mesomycoplasma hyopneumoniae (strain J / ATCC 25934 / NCTC 10110) (Mycoplasma hyopneumoniae).